A 133-amino-acid chain; its full sequence is MTDEQIYAFCDANKDDIRCKCIYPDKSIVRIGIDTRLPYYCWYEPCKRSDALLPASLKKNITKCNVSDCTISLGNVSITDSKLDVNNVCDSKRVATENIAVRYLNQEIRYPIIDIKWLPIGLLALAILILAFF.

Residues 1-111 lie on the Virion surface side of the membrane; sequence MTDEQIYAFC…RYLNQEIRYP (111 aa). The helical; Signal-anchor transmembrane segment at 112 to 132 threads the bilayer; that stretch reads IIDIKWLPIGLLALAILILAF.

It belongs to the orthopoxvirus OPG104 family. As to quaternary structure, part of a stable entry-fusion complex (EFC) which is at least composed of proteins OPG143, OPG147, OPG155, OPG086, OPG094, OPG107, OPG104, and OPG099. Formation of the viral membrane is necessary for the assembly of the complex.

It is found in the virion membrane. In terms of biological role, envelope protein part of the entry-fusion complex responsible for the virus membrane fusion with host cell membrane during virus entry. Also plays a role in cell-cell fusion (syncytium formation). This chain is Protein OPG104 (OPG104), found in Homo sapiens (Human).